Consider the following 789-residue polypeptide: Trimethylamine-oxide aldolase (789 aa).

It in the C-terminal section; belongs to the GcvT family.

It carries out the reaction trimethylamine N-oxide + H(+) = dimethylamine + formaldehyde. Functionally, catalyzes the conversion of trimethylamine N-oxide (TMAO) to dimethylamine (DMA) and formaldehyde. This is Trimethylamine-oxide aldolase from Ruegeria pomeroyi (strain ATCC 700808 / DSM 15171 / DSS-3) (Silicibacter pomeroyi).